Here is a 188-residue protein sequence, read N- to C-terminus: MDEMNLGPEAQELHDSIVAEIQSGVLKLKDGLPFGTGDETEMQYDVTLRELTAGDMIDAQAAAEKLVMSKEGPVLVSSPSRMGLEMLRRQIASVGCIKGPLSMALIRKLSVDDFQRLSLATEMYDMAVAASLTQERGGEWLRCRNDIEKAATAIGVILKSGPEWALSLPLSRFFRHCQQAKTLSQYHR.

The protein belongs to the mulikevirus tail assembly protein family.

Its subcellular location is the host cytoplasm. Required for tail assembly. Together with gp41, may act as a chaperone promoting the assembly of the tape measure protein (TMP) and the tail tube protein (TTP) into a functional tail shaft (Potential). The polypeptide is Probable tail assembly protein FS-gp41 (Enterobacteriaceae (Bacteriophage Mu)).